A 432-amino-acid chain; its full sequence is Competence protein ComFA (432 aa).

Residues C40, C43, C60, and C63 each contribute to the Zn(2+) site. Positions 107 to 257 (LQAVDKQKPT…RLGELKRLNL (151 aa)) constitute a Helicase ATP-binding domain. ATP is bound at residue 120–127 (AVTGAGKT). Positions 205 to 208 (DEVD) match the DEAD box motif. The Helicase C-terminal domain occupies 289-432 (KLKSYIEKQR…IQMMNKEAGL (144 aa)).

Belongs to the DEAD box helicase family. Monomer and dimer in solution. Interacts with DprA and ComFC; ComFA-ComFC form rings about 150 Angstroms in diameter with apparent 6-fold symmetry. Requires Zn(2+) as cofactor.

The protein resides in the cytoplasm. In terms of biological role, involved in transformation (genetic competence for DNA uptake). DNA uptake is energy dependent, this protein may provide the driving force for DNA uptake. Does not have helicase activity, translocates on single-stranded (ss)DNA in a 5'-3' direction in an ATP-dependent manner, but does not unwind double-stranded (ds)DNA (tested with 5'- and 3'-overhang dsDNA). ATP hydrolysis causes the release of ssDNA from ComFA. A ssDNA-stimulated ATPase; dsDNA does not stimulate ATPase. ATP hydrolysis causes the release of ssDNA from ComFA. ComFC has no effect on ATPase activity. Binds ssDNA but only very poorly to dsDNA in the absence of ATP. Binding to ssDNA does not require free DNA ends. The polypeptide is Competence protein ComFA (Streptococcus pneumoniae (strain ATCC BAA-255 / R6)).